Here is a 307-residue protein sequence, read N- to C-terminus: 4-hydroxythreonine-4-phosphate dehydrogenase (307 aa).

2 residues coordinate substrate: His-126 and Thr-127. A divalent metal cation contacts are provided by His-156, His-195, and His-251. 3 residues coordinate substrate: Lys-259, Asn-268, and Arg-277.

The protein belongs to the PdxA family. Homodimer. Zn(2+) serves as cofactor. Requires Mg(2+) as cofactor. The cofactor is Co(2+).

Its subcellular location is the cytoplasm. The enzyme catalyses 4-(phosphooxy)-L-threonine + NAD(+) = 3-amino-2-oxopropyl phosphate + CO2 + NADH. It functions in the pathway cofactor biosynthesis; pyridoxine 5'-phosphate biosynthesis; pyridoxine 5'-phosphate from D-erythrose 4-phosphate: step 4/5. Catalyzes the NAD(P)-dependent oxidation of 4-(phosphooxy)-L-threonine (HTP) into 2-amino-3-oxo-4-(phosphooxy)butyric acid which spontaneously decarboxylates to form 3-amino-2-oxopropyl phosphate (AHAP). The sequence is that of 4-hydroxythreonine-4-phosphate dehydrogenase from Helicobacter pylori (strain HPAG1).